The primary structure comprises 278 residues: MANFKGHALPGSFFLIFGLWWSVKYPLKYFHQKGLKKNRLSLQQQRIEIIEGAVKALFAVIGILAEQFVPDGPHLHLYHENQWTKLMNWQHSTMYLFFGVSGIIDMLTYLYFNIVPLGLDRVVLAMAVFVEGFLFYFHVHGRPPLDQHIHSLLLFSLFGATISICLEVILRDNIVLELFRTTLLILQGTWFWQIGFVLFPPFGTPEWDQKDMDNVMFITMCFCWHYLVALCITAINYSLVYCFLTRVRRRAEGEIIGIQKLKSDHTYQSTLLSGSDEE.

The next 7 membrane-spanning stretches (helical) occupy residues 7–27 (HALPGSFFLIFGLWWSVKYPL), 49–69 (IIEGAVKALFAVIGILAEQFV), 95–115 (YLFFGVSGIIDMLTYLYFNIV), 117–137 (LGLDRVVLAMAVFVEGFLFYF), 149–169 (IHSLLLFSLFGATISICLEVI), 183–203 (LLILQGTWFWQIGFVLFPPFG), and 215–235 (VMFITMCFCWHYLVALCITAI). A phosphoserine mark is found at S273 and S275.

It belongs to the TMEM45 family.

Its subcellular location is the endosome membrane. The protein localises to the lysosome membrane. The protein resides in the golgi apparatus. It is found in the trans-Golgi network membrane. Plays a role in innate immunity. The chain is Transmembrane protein 45B (Tmem45b) from Rattus norvegicus (Rat).